The chain runs to 503 residues: 5'-3' exonuclease PLD4 (503 aa).

Topologically, residues 1-36 are cytoplasmic; it reads MDKKKEHPEMRIPLQTAVEVSDWPCSTSHDPHSGLG. A signal-anchor for type II membrane protein membrane pass occupies residues 37 to 57; sequence MVLGMLAVLGLSSVTLILFLW. Over 58-503 the chain is Lumenal; it reads QGATSFTSHR…RQVPSQDCVW (446 aa). 3 N-linked (GlcNAc...) asparagine glycosylation sites follow: asparagine 89, asparagine 148, and asparagine 169. The cysteines at positions 92 and 248 are disulfide-linked. One can recognise a PLD phosphodiesterase 1 domain in the interval 207–234; it reads TGGVLHSKFWVVDGRHIYVGSANMDWRS. Catalysis depends on residues histidine 212, lysine 214, and aspartate 219. Histidine 212 serves as the catalytic Proton donor. 4 N-linked (GlcNAc...) asparagine glycosylation sites follow: asparagine 247, asparagine 279, asparagine 415, and asparagine 425. Residues cysteine 377 and cysteine 501 are joined by a disulfide bond. The PLD phosphodiesterase 2 domain maps to 421 to 447; that stretch reads FSRVNHSKFMVTDKTAYVGTSNWSEDY. Catalysis depends on residues histidine 426, lysine 428, and aspartate 433. Catalysis depends on histidine 426, which acts as the Nucleophile. An N-linked (GlcNAc...) asparagine glycan is attached at asparagine 442.

It belongs to the phospholipase D family. Post-translationally, highly N-glycosylated. In terms of tissue distribution, enriched in the white matter of early postnatal brains, as well as in splenic marginal zone cells. Highly expressed in dendritic cells (DCs) and other myeloid cells, with lower expression in B cell.

The protein localises to the endoplasmic reticulum membrane. The protein resides in the golgi apparatus. Its subcellular location is the trans-Golgi network membrane. It is found in the nucleus. It localises to the early endosome. The protein localises to the cytoplasmic vesicle. The protein resides in the phagosome. Its subcellular location is the lysosome. It catalyses the reaction Exonucleolytic cleavage in the 5'- to 3'-direction to yield nucleoside 3'-phosphates.. It carries out the reaction a 5'-end 5'-dephospho-ribonucleotidyl-ribonucleotide-RNA + H2O = a ribonucleoside 3'-phosphate + a 5'-end dephospho-ribonucleoside-RNA + H(+). The enzyme catalyses a ribonucleoside 3'-phosphate-2'-3'-cyclophospho-GMP + H2O = a ribonucleoside 3'-phosphate + 2',3'-cyclophospho-GMP + H(+). The catalysed reaction is a 5'-end 5'-dephospho-2'-deoxyribonucleotidyl-2'-deoxyribonucleotide in single-stranded DNA + H2O = a 5'-end dephospho-2'-deoxyribonucleoside in single-stranded DNA + a 2'-deoxyribonucleoside 3'-phosphate + H(+). It catalyses the reaction a 5'-end 5'-phospho-2'-deoxyribonucleotide in single-stranded DNA + H2O = a 5'-end 5'-dephospho-2'-deoxyribonucleotide in single-stranded DNA + phosphate. It carries out the reaction a 3-lyso-sn-glycero-1-phospho-(3'-acyl-1'-sn-glycerol) + a 1-acyl-sn-glycerol = a 3-acyl-sn-glycero-1-phospho-(3'-acyl-1'-sn-glycerol) + glycerol. The enzyme catalyses 3-lyso-sn-glycero-1-phospho-(3'-(9Z-octadecenoyl)-1'-sn-glycerol) + 1-(9Z-octadecenoyl)-sn-glycerol = 3-(9Z-octadecenoyl)-sn-glycero-1-phospho-(3'-(9Z-octadecenoyl)-1'-sn-glycerol) + glycerol. Its activity is regulated as follows. The exonuclease activity toward ssDNA substrate is Ca(2+) and Mg(2+)-independent, but it is inhibited by Fe(2+), Cu(2+) and to a lesser extent Zn(2+) ions. In terms of biological role, 5'-&gt;3' exonuclease that hydrolyzes the phosphodiester bond of single-stranded DNA (ssDNA) and RNA molecules to form nucleoside 3'-monophosphates and 5'-end 5'-hydroxy deoxyribonucleotide/ribonucleotide fragments. Partially redundant with PLD4, can cleave all four nucleotides displaying higher efficiency for ssDNA and RNA fragments initiated with uridine and guanosine residues and lower efficiency for cytidine-initiated substrates. As a result, it does not always degrade polynucleotides to the single nucleotide level, it can stall at specific sites sparing certain fragments from exonucleolytic degradation. Processes self and pathogenic ssDNA and RNA molecules that reach the endolysosomal compartment via phagocytosis or autophagy and may serve as 'danger' signals for recognition by innate immune receptors such as toll-like receptors (TLRs). Degrades mitochondrial CpG-rich ssDNA fragments to prevent TLR9 activation and autoinflammatory response, but it can cleave viral RNA to generate ligands for TLR7 activation and initiate antiviral immune responses. In plasmacytoid dendritic cells, it cooperates with endonuclease RNASET2 to release 2',3'-cyclic guanosine monophosphate (2',3'-cGMP), a potent stimulatory ligand for TLR7. Produces 2',3'-cGMPs and cytidine-rich RNA fragments that occupy TLR7 ligand-binding pockets and trigger a signaling-competent state. Can exert polynucleotide phosphatase activity toward 5'-phosphorylated ssDNA substrates although at a slow rate. Transphosphatidylase that catalyzes the exchange with R to S stereo-inversion of the glycerol moiety between (S,R)-lysophosphatidylglycerol (LPG) and monoacylglycerol (MAG) substrates to yield (S,S)-bis(monoacylglycero)phosphate (BMP). Can synthesize a variety of (S,S)-BMPs representing the main phospholipid constituent of lysosomal intralumenal vesicle (ILV) membranes that bind acid hydrolases for lipid degradation. Regulates the homeostasis and interorganellar communication of the endolysosomal system with an overall impact on cellular removal of dysfunctional organelles via autophagy as well as proper protein and lipid turnover. May play a role in myotube formation in response to ER stress. In Mus musculus (Mouse), this protein is 5'-3' exonuclease PLD4.